Reading from the N-terminus, the 539-residue chain is Inosine-5'-monophosphate dehydrogenase (539 aa).

CBS domains follow at residues 140 to 196 and 200 to 257; these read IIVN…DMPI and MTRE…PRAC. NAD(+) contacts are provided by residues aspartate 292 and 343 to 345; that span reads GIG. K(+)-binding residues include glycine 345 and glycine 347. Residue serine 348 participates in IMP binding. Cysteine 350 provides a ligand contact to K(+). Residue cysteine 350 is the Thioimidate intermediate of the active site. IMP contacts are provided by residues 383–385, 406–407, and 430–434; these read DGG, GS, and YRGMG. The active-site Proton acceptor is the arginine 446. Glutamate 460 provides a ligand contact to IMP. K(+) contacts are provided by glutamate 514 and histidine 516. The segment at 517 to 539 is disordered; the sequence is PHDIAITQEAPNYSPDVHSGDAG.

The protein belongs to the IMPDH/GMPR family. Homotetramer. The cofactor is K(+).

It catalyses the reaction IMP + NAD(+) + H2O = XMP + NADH + H(+). The protein operates within purine metabolism; XMP biosynthesis via de novo pathway; XMP from IMP: step 1/1. Its activity is regulated as follows. Mycophenolic acid (MPA) is a non-competitive inhibitor that prevents formation of the closed enzyme conformation by binding to the same site as the amobile flap. In contrast, mizoribine monophosphate (MZP) is a competitive inhibitor that induces the closed conformation. MPA is a potent inhibitor of mammalian IMPDHs but a poor inhibitor of the bacterial enzymes. MZP is a more potent inhibitor of bacterial IMPDH. Its function is as follows. Catalyzes the conversion of inosine 5'-phosphate (IMP) to xanthosine 5'-phosphate (XMP), the first committed and rate-limiting step in the de novo synthesis of guanine nucleotides, and therefore plays an important role in the regulation of cell growth. The protein is Inosine-5'-monophosphate dehydrogenase of Rhodopirellula baltica (strain DSM 10527 / NCIMB 13988 / SH1).